Consider the following 333-residue polypeptide: NADH-quinone oxidoreductase subunit H (333 aa).

The next 8 helical transmembrane spans lie at 15–35 (FFIF…FVTY), 88–108 (FILA…VIPF), 117–137 (IGVG…GVVT), 159–179 (ISYE…AGSL), 191–211 (VWYI…AVAE), 239–259 (WAFF…LITV), 274–296 (IPGA…WFRV), and 313–333 (VLLP…ELFF).

It belongs to the complex I subunit 1 family. As to quaternary structure, NDH-1 is composed of 14 different subunits. Subunits NuoA, H, J, K, L, M, N constitute the membrane sector of the complex.

The protein localises to the cell membrane. The catalysed reaction is a quinone + NADH + 5 H(+)(in) = a quinol + NAD(+) + 4 H(+)(out). NDH-1 shuttles electrons from NADH, via FMN and iron-sulfur (Fe-S) centers, to quinones in the respiratory chain. The immediate electron acceptor for the enzyme in this species is believed to be ubiquinone. Couples the redox reaction to proton translocation (for every two electrons transferred, four hydrogen ions are translocated across the cytoplasmic membrane), and thus conserves the redox energy in a proton gradient. This subunit may bind ubiquinone. This Bacillus thuringiensis subsp. konkukian (strain 97-27) protein is NADH-quinone oxidoreductase subunit H.